The sequence spans 326 residues: Flotillin-like protein FloA (326 aa).

The next 2 helical transmembrane spans lie at 6 to 26 (IILFFLVVAVIVLFYFVGSSV) and 27 to 47 (SLWIQALVSGARVGLLNIVFM).

The protein belongs to the flotillin-like FloA family. As to quaternary structure, homooligomerizes.

The protein resides in the cell membrane. Its subcellular location is the membrane raft. Its function is as follows. Found in functional membrane microdomains (FMM) that may be equivalent to eukaryotic membrane rafts. FMMs are highly dynamic and increase in number as cells age. Flotillins are thought to be important factors in membrane fluidity. The protein is Flotillin-like protein FloA of Desulfosudis oleivorans (strain DSM 6200 / JCM 39069 / Hxd3) (Desulfococcus oleovorans).